The sequence spans 575 residues: Phosphoenolpyruvate-protein phosphotransferase (575 aa).

His-191 serves as the catalytic Tele-phosphohistidine intermediate. Arg-298 and Arg-334 together coordinate phosphoenolpyruvate. 2 residues coordinate Mg(2+): Glu-435 and Asp-459. Residues 458 to 459 (ND) and Arg-469 contribute to the phosphoenolpyruvate site. Cys-506 serves as the catalytic Proton donor.

The protein belongs to the PEP-utilizing enzyme family. In terms of assembly, homodimer. Mg(2+) is required as a cofactor.

Its subcellular location is the cytoplasm. The enzyme catalyses L-histidyl-[protein] + phosphoenolpyruvate = N(pros)-phospho-L-histidyl-[protein] + pyruvate. Its function is as follows. General (non sugar-specific) component of the phosphoenolpyruvate-dependent sugar phosphotransferase system (sugar PTS). This major carbohydrate active-transport system catalyzes the phosphorylation of incoming sugar substrates concomitantly with their translocation across the cell membrane. Enzyme I transfers the phosphoryl group from phosphoenolpyruvate (PEP) to the phosphoryl carrier protein (HPr). The chain is Phosphoenolpyruvate-protein phosphotransferase (ptsI) from Lactococcus lactis subsp. cremoris (Streptococcus cremoris).